We begin with the raw amino-acid sequence, 291 residues long: 4-diphosphocytidyl-2-C-methyl-D-erythritol kinase (291 aa).

Residue K10 is part of the active site. 94 to 104 contacts ATP; it reads PVSAGLAGGSS. D136 is a catalytic residue.

The protein belongs to the GHMP kinase family. IspE subfamily.

It carries out the reaction 4-CDP-2-C-methyl-D-erythritol + ATP = 4-CDP-2-C-methyl-D-erythritol 2-phosphate + ADP + H(+). Its pathway is isoprenoid biosynthesis; isopentenyl diphosphate biosynthesis via DXP pathway; isopentenyl diphosphate from 1-deoxy-D-xylulose 5-phosphate: step 3/6. In terms of biological role, catalyzes the phosphorylation of the position 2 hydroxy group of 4-diphosphocytidyl-2C-methyl-D-erythritol. The sequence is that of 4-diphosphocytidyl-2-C-methyl-D-erythritol kinase from Listeria welshimeri serovar 6b (strain ATCC 35897 / DSM 20650 / CCUG 15529 / CIP 8149 / NCTC 11857 / SLCC 5334 / V8).